A 582-amino-acid chain; its full sequence is MRNAQKPSGMPVHRYLPFHEQIEVELPDRTWPTKRITTAPRWCAVDLRDGNQALIDPMSPARKLKMFELLVKMGYKEIEVGFPSASQTDFDFVRQLIQGGHIPEDVTIQVLTQAREHLIERTYESLVGAKQAIVHLYNSTSVLQRRVVFNEDQDGIMALATQGALLCKKYQETLTDTKITYEYSPESFTGTELDYAVRVCNAVADIFEASADNQVIVNLPATVEMITPNVYADSIEWMSHNLHPREGIILSLHPHNDRGTGVAAAELGYLAGADRIEGCLFGNGERAGNVDLVTLGLNMFSQGVDPMIDFSDIDEIRRTVEYCNQLPAPERMPYGGDLVFTAFSGSHQDAIKKGFEALERDADAAGIAVADTVWAVPYLPVDPKDLGRSYEAVIRVNSQSGKGGVAYLLKSEHSLDLPRRAQIEFSGVIQRRTDSVGGEVSADQRWEAFTDEYLPSPAGHPGGQWGRYALGSMNADTEEDGTTKLNTAMRIDGVEQRRSGSGNGPIAALLNILHDDGVDVRVLDYSEHALSEGGNASAASYVECAVGDRVLWGLGIDPNTTVSSLKAVISAVNRAIRDNQVD.

In terms of domain architecture, Pyruvate carboxyltransferase spans proline 40–aspartate 314. Mg(2+)-binding residues include aspartate 49, histidine 253, histidine 255, and asparagine 289. The segment at serine 456–aspartate 582 is regulatory domain.

This sequence belongs to the alpha-IPM synthase/homocitrate synthase family. LeuA type 2 subfamily. Homodimer. It depends on Mg(2+) as a cofactor.

It is found in the cytoplasm. The enzyme catalyses 3-methyl-2-oxobutanoate + acetyl-CoA + H2O = (2S)-2-isopropylmalate + CoA + H(+). The protein operates within amino-acid biosynthesis; L-leucine biosynthesis; L-leucine from 3-methyl-2-oxobutanoate: step 1/4. Catalyzes the condensation of the acetyl group of acetyl-CoA with 3-methyl-2-oxobutanoate (2-ketoisovalerate) to form 3-carboxy-3-hydroxy-4-methylpentanoate (2-isopropylmalate). This chain is 2-isopropylmalate synthase, found in Renibacterium salmoninarum (strain ATCC 33209 / DSM 20767 / JCM 11484 / NBRC 15589 / NCIMB 2235).